We begin with the raw amino-acid sequence, 400 residues long: MHADTLDAMLHHELPHAAAGCQQAYGRIVTACQNTVTAIALAITRDVAASEDIAQEAFLRAWQRLAQLHQPASFLPWLRQITRNLARDWLRSHRHRPLSGEAADLAIAMAADPSPSPAEQALQVEEERAALEIMSALPNDSREILLLYYREGQRSQQVASLLGLSDAAVRKRLSRARATVRNELLQRFDTFARGSAPGVAFATTVTAATMLAAPGTASAAIALGGIGSLGGVGKLGASGLSGSALTSGSAAGALSVLLGMPMAIALLAITGVTLTTYMSGAYLLRFATTAREAAAIRGFTRLSTLTAALTCGAPLLLRAFGAPKWLALCVLAVGMSVVCYHTLGTLPRIMQPMLERDARRRGTTRPPLLYRCMFSRSAIAVSLAAVIVPIAYRYGVLGLV.

Residues 62–75 carry the Polymerase core binding motif; it reads WQRLAQLHQPASFL. A DNA-binding region (H-T-H motif) is located at residues 165–184; it reads SDAAVRKRLSRARATVRNEL.

This sequence belongs to the sigma-70 factor family. ECF subfamily.

In terms of biological role, sigma factors are initiation factors that promote the attachment of RNA polymerase to specific initiation sites and are then released. This sigma factor is involved in lipopolysaccharide biosynthesis and pathogenicity. In Xanthomonas campestris pv. campestris (strain ATCC 33913 / DSM 3586 / NCPPB 528 / LMG 568 / P 25), this protein is Probable RNA polymerase sigma factor RfaY (rfaY).